The primary structure comprises 453 residues: Bifunctional protein GlmU (453 aa).

Residues 1-226 are pyrophosphorylase; the sequence is MAFSVVILAA…EIEVEGINNR (226 aa). UDP-N-acetyl-alpha-D-glucosamine contacts are provided by residues 8 to 11, K22, Q73, and 78 to 79; these read LAAG and GT. D102 contacts Mg(2+). Positions 137, 151, 166, and 224 each coordinate UDP-N-acetyl-alpha-D-glucosamine. N224 is a binding site for Mg(2+). The linker stretch occupies residues 227–247; sequence KQLAAIERAFQFEQAQELMMQ. Positions 248 to 453 are N-acetyltransferase; that stretch reads GVSLLDPHRF…SGWQRPTKPE (206 aa). The UDP-N-acetyl-alpha-D-glucosamine site is built by R330 and K348. The active-site Proton acceptor is the H360. UDP-N-acetyl-alpha-D-glucosamine is bound by residues Y363 and N374. Acetyl-CoA is bound by residues A377, 383–384, S402, A420, and R437; that span reads NY.

It in the N-terminal section; belongs to the N-acetylglucosamine-1-phosphate uridyltransferase family. In the C-terminal section; belongs to the transferase hexapeptide repeat family. In terms of assembly, homotrimer. Mg(2+) is required as a cofactor.

The protein localises to the cytoplasm. The enzyme catalyses alpha-D-glucosamine 1-phosphate + acetyl-CoA = N-acetyl-alpha-D-glucosamine 1-phosphate + CoA + H(+). It catalyses the reaction N-acetyl-alpha-D-glucosamine 1-phosphate + UTP + H(+) = UDP-N-acetyl-alpha-D-glucosamine + diphosphate. It participates in nucleotide-sugar biosynthesis; UDP-N-acetyl-alpha-D-glucosamine biosynthesis; N-acetyl-alpha-D-glucosamine 1-phosphate from alpha-D-glucosamine 6-phosphate (route II): step 2/2. The protein operates within nucleotide-sugar biosynthesis; UDP-N-acetyl-alpha-D-glucosamine biosynthesis; UDP-N-acetyl-alpha-D-glucosamine from N-acetyl-alpha-D-glucosamine 1-phosphate: step 1/1. Its pathway is bacterial outer membrane biogenesis; LPS lipid A biosynthesis. Functionally, catalyzes the last two sequential reactions in the de novo biosynthetic pathway for UDP-N-acetylglucosamine (UDP-GlcNAc). The C-terminal domain catalyzes the transfer of acetyl group from acetyl coenzyme A to glucosamine-1-phosphate (GlcN-1-P) to produce N-acetylglucosamine-1-phosphate (GlcNAc-1-P), which is converted into UDP-GlcNAc by the transfer of uridine 5-monophosphate (from uridine 5-triphosphate), a reaction catalyzed by the N-terminal domain. In Pseudoalteromonas atlantica (strain T6c / ATCC BAA-1087), this protein is Bifunctional protein GlmU.